We begin with the raw amino-acid sequence, 86 residues long: MPKSEIHPKWYPDAKVICNGEVVMTTGSTQPELHVDVWSGNHPFFTGTQKILDTEGRVDRFMKKYGMGSANSATSKEQKADKDSQK.

The disordered stretch occupies residues 66–86 (GMGSANSATSKEQKADKDSQK). Over residues 76-86 (KEQKADKDSQK) the composition is skewed to basic and acidic residues.

Belongs to the bacterial ribosomal protein bL31 family. Type A subfamily. In terms of assembly, part of the 50S ribosomal subunit.

Binds the 23S rRNA. This chain is Large ribosomal subunit protein bL31, found in Prochlorococcus marinus (strain MIT 9215).